A 382-amino-acid polypeptide reads, in one-letter code: MIKSALLVLEDGTQFHGRAIGATGSAVGEVVFNTSMTGYQEILTDPSYSRQIVTLTYPHIGNVGTNEADEESSQVHAQGLVIRDLPLIASNFRNTEDLSSYLKRHNIVAIADIDTRKLTRLLREKGAQNGCIIAGDSPDAKLALEKAKAFPGLNGMDLAKEVTTAETYRWTQGSWTLKDGLPEAKSEDDLPFHVVAYDFGAKRNILRMLVDRGCRLTVVPAQTSAEEVLKMNPDGIFLSNGPSDPAPCDYAIEAIKKFLQTDIPVFGICLGHQLLALASGAKTVKMKFGHHGGNHPVKDMDRNVVMITAQNHGFAVDEDSLPANLRVTHKSLFDGTLQGIHRTDKPAFSFQGHPEASPGPHDAAPLFDHFIELIKHYRSSAK.

The segment at 1-189 is CPSase; it reads MIKSALLVLE…GLPEAKSEDD (189 aa). 2 residues coordinate L-glutamine: Ser47 and Gly241. The Glutamine amidotransferase type-1 domain maps to 193–380; that stretch reads HVVAYDFGAK…IELIKHYRSS (188 aa). Catalysis depends on Cys269, which acts as the Nucleophile. The L-glutamine site is built by Leu270, Gln273, Asn311, Gly313, and Phe314. Catalysis depends on residues His353 and Glu355.

Belongs to the CarA family. As to quaternary structure, composed of two chains; the small (or glutamine) chain promotes the hydrolysis of glutamine to ammonia, which is used by the large (or ammonia) chain to synthesize carbamoyl phosphate. Tetramer of heterodimers (alpha,beta)4.

It catalyses the reaction hydrogencarbonate + L-glutamine + 2 ATP + H2O = carbamoyl phosphate + L-glutamate + 2 ADP + phosphate + 2 H(+). The enzyme catalyses L-glutamine + H2O = L-glutamate + NH4(+). Its pathway is amino-acid biosynthesis; L-arginine biosynthesis; carbamoyl phosphate from bicarbonate: step 1/1. It functions in the pathway pyrimidine metabolism; UMP biosynthesis via de novo pathway; (S)-dihydroorotate from bicarbonate: step 1/3. Functionally, small subunit of the glutamine-dependent carbamoyl phosphate synthetase (CPSase). CPSase catalyzes the formation of carbamoyl phosphate from the ammonia moiety of glutamine, carbonate, and phosphate donated by ATP, constituting the first step of 2 biosynthetic pathways, one leading to arginine and/or urea and the other to pyrimidine nucleotides. The small subunit (glutamine amidotransferase) binds and cleaves glutamine to supply the large subunit with the substrate ammonia. The protein is Carbamoyl phosphate synthase small chain of Salmonella typhi.